The primary structure comprises 106 residues: MRVVRQSGSALSRAKKSRKYTSYRVMNVVLNTLFSFVLAPYIHYILEEISPQWTTREMNTEICFLAKFSFLLVFLFYLNFQGFNSVSNITTSSSPTYDNNRHYGND.

2 helical membrane passes run 25-45 (VMNV…IHYI) and 62-82 (ICFL…NFQG).

It localises to the membrane. This is an uncharacterized protein from Saccharomyces cerevisiae (strain ATCC 204508 / S288c) (Baker's yeast).